A 371-amino-acid chain; its full sequence is Bifunctional enzyme IspD/IspF (371 aa).

Residues Met-1 to Ile-210 form a 2-C-methyl-D-erythritol 4-phosphate cytidylyltransferase region. A 2-C-methyl-D-erythritol 2,4-cyclodiphosphate synthase region spans residues Phe-211–Leu-371. A divalent metal cation is bound by residues Asp-217 and His-219. 4-CDP-2-C-methyl-D-erythritol 2-phosphate contacts are provided by residues Asp-217–His-219 and His-243–Ser-244. His-251 contacts a divalent metal cation. 4-CDP-2-C-methyl-D-erythritol 2-phosphate is bound by residues Asp-265–Gly-267, Tyr-270–Asp-274, Thr-341–Glu-344, Phe-348, and Arg-351.

The protein in the N-terminal section; belongs to the IspD/TarI cytidylyltransferase family. IspD subfamily. It in the C-terminal section; belongs to the IspF family. It depends on a divalent metal cation as a cofactor.

It catalyses the reaction 2-C-methyl-D-erythritol 4-phosphate + CTP + H(+) = 4-CDP-2-C-methyl-D-erythritol + diphosphate. The enzyme catalyses 4-CDP-2-C-methyl-D-erythritol 2-phosphate = 2-C-methyl-D-erythritol 2,4-cyclic diphosphate + CMP. Its pathway is isoprenoid biosynthesis; isopentenyl diphosphate biosynthesis via DXP pathway; isopentenyl diphosphate from 1-deoxy-D-xylulose 5-phosphate: step 2/6. It participates in isoprenoid biosynthesis; isopentenyl diphosphate biosynthesis via DXP pathway; isopentenyl diphosphate from 1-deoxy-D-xylulose 5-phosphate: step 4/6. Its function is as follows. Bifunctional enzyme that catalyzes the formation of 4-diphosphocytidyl-2-C-methyl-D-erythritol from CTP and 2-C-methyl-D-erythritol 4-phosphate (MEP) (IspD), and catalyzes the conversion of 4-diphosphocytidyl-2-C-methyl-D-erythritol 2-phosphate (CDP-ME2P) to 2-C-methyl-D-erythritol 2,4-cyclodiphosphate (ME-CPP) with a corresponding release of cytidine 5-monophosphate (CMP) (IspF). This chain is Bifunctional enzyme IspD/IspF, found in Campylobacter jejuni subsp. jejuni serotype O:6 (strain 81116 / NCTC 11828).